The following is a 523-amino-acid chain: Jerky protein homolog-like (523 aa).

The region spanning 1-52 is the HTH psq-type domain; it reads MSGKRKRVVLTIKDKLDIIKKLEDGGSSKQLAVIYGIGETTVRDIRKNKEKI. DNA-binding regions (H-T-H motif) lie at residues 28–48 and 100–132; these read SKQL…IRKN and PICA…FKQR. The HTH CENPB-type domain maps to 67–139; it reads KRKSMKPSMY…KQRHSIREIN (73 aa). Residues 168–385 enclose the DDE-1 domain; it reads LQPEQIYNAD…VKPVTISRAW (218 aa).

The protein belongs to the tigger transposable element derived protein family.

It localises to the nucleus. This chain is Jerky protein homolog-like (Jrkl), found in Mus musculus (Mouse).